Consider the following 377-residue polypeptide: MAKRDFYEVLGVERGASEADLKKAYRRLAMKYHPDRNPGDKEAEDKFKEANEAYEVLSDASKRAAYDQYGHAGVDPNMGGGAGAGFGGASFSDIFGDVFSDFFGGGGGRGGARGGAQRGADLRYTLDLDLEEAVRGTTVTIRVPTLVGCKTCNGSGAKPGTTPVTCTTCGGIGQVRMQQGFFSVQQTCPRCHGTGKMISDPCGSCHGQGRVEEQKTLSVKVPAGVDTGDRIRLTGEGEAGSMGGPAGDLYVVVNVREHPIFQRDGKHLYCEVPISFADAALGGELEVPTLDGRVKLKIPESTQTGKLFRLRGKGVAPVRGGGAGDLMCKVVVETPVNLDKRQRELLEEFRKSLQSDTSHSPKASGWFEGMKRFFDDL.

The 66-residue stretch at 5-70 (DFYEVLGVER…SKRAAYDQYG (66 aa)) folds into the J domain. The segment at 136–214 (GTTVTIRVPT…CHGQGRVEEQ (79 aa)) adopts a CR-type zinc-finger fold. The Zn(2+) site is built by Cys149, Cys152, Cys166, Cys169, Cys188, Cys191, Cys202, and Cys205. CXXCXGXG motif repeat units lie at residues 149–156 (CKTCNGSG), 166–173 (CTTCGGIG), 188–195 (CPRCHGTG), and 202–209 (CGSCHGQG).

It belongs to the DnaJ family. As to quaternary structure, homodimer. Zn(2+) serves as cofactor.

The protein resides in the cytoplasm. Its function is as follows. Participates actively in the response to hyperosmotic and heat shock by preventing the aggregation of stress-denatured proteins and by disaggregating proteins, also in an autonomous, DnaK-independent fashion. Unfolded proteins bind initially to DnaJ; upon interaction with the DnaJ-bound protein, DnaK hydrolyzes its bound ATP, resulting in the formation of a stable complex. GrpE releases ADP from DnaK; ATP binding to DnaK triggers the release of the substrate protein, thus completing the reaction cycle. Several rounds of ATP-dependent interactions between DnaJ, DnaK and GrpE are required for fully efficient folding. Also involved, together with DnaK and GrpE, in the DNA replication of plasmids through activation of initiation proteins. The polypeptide is Chaperone protein DnaJ (Pseudomonas paraeruginosa (strain DSM 24068 / PA7) (Pseudomonas aeruginosa (strain PA7))).